Here is a 175-residue protein sequence, read N- to C-terminus: Ribosome maturation factor RimM (175 aa).

Residues 99–172 (ADEYHVSDLI…RLEVDAPPGL (74 aa)) form the PRC barrel domain.

The protein belongs to the RimM family. In terms of assembly, binds ribosomal protein uS19.

The protein resides in the cytoplasm. In terms of biological role, an accessory protein needed during the final step in the assembly of 30S ribosomal subunit, possibly for assembly of the head region. Essential for efficient processing of 16S rRNA. May be needed both before and after RbfA during the maturation of 16S rRNA. It has affinity for free ribosomal 30S subunits but not for 70S ribosomes. The sequence is that of Ribosome maturation factor RimM from Picosynechococcus sp. (strain ATCC 27264 / PCC 7002 / PR-6) (Agmenellum quadruplicatum).